The following is a 460-amino-acid chain: Lipase member H (460 aa).

The N-terminal stretch at 1–24 (MLLRFYFNGLLFVGCLLSWGRSDT) is a signal peptide. N-linked (GlcNAc...) asparagine glycosylation is found at asparagine 67 and asparagine 75. The active-site Nucleophile is the serine 163. N-linked (GlcNAc...) asparagine glycosylation is present at asparagine 177. Aspartate 187 acts as the Charge relay system in catalysis. The cysteines at positions 242 and 255 are disulfide-linked. Residue histidine 257 is the Charge relay system of the active site. 2 disulfides stabilise this stretch: cysteine 279–cysteine 290 and cysteine 293–cysteine 301. N-linked (GlcNAc...) asparagine glycosylation is present at asparagine 289. Asparagine 366 carries an N-linked (GlcNAc...) asparagine glycan. Cysteines 436 and 455 form a disulfide.

The protein belongs to the AB hydrolase superfamily. Lipase family.

The protein resides in the secreted. The protein localises to the cell membrane. The enzyme catalyses 1-hexadecanoyl-2-(9Z-octadecenoyl)-sn-glycero-3-phosphate + H2O = 2-(9Z-octadecenoyl)-sn-glycero-3-phosphate + hexadecanoate + H(+). Functionally, hydrolyzes specifically phosphatidic acid (PA) to produce 2-acyl lysophosphatidic acid (LPA; a potent bioactive lipid mediator) and fatty acid. Does not hydrolyze other phospholipids, like phosphatidylserine (PS), phosphatidylcholine (PC) and phosphatidylethanolamine (PE) or triacylglycerol (TG). The sequence is that of Lipase member H (liph) from Xenopus tropicalis (Western clawed frog).